The chain runs to 412 residues: MNDLIINHIAELILPRSTDKPLKGKELDELNVVKNGTVVIKDGKIVYAGQHTDDYDATETIDASGKVVSPALVDAHTHLTFGGSREHEMSLKRQGKSYLEILEMGGGILSTVNATRETSEDDLFKKAEHDLLTMIKHGVLAVESKSGYGLDRENELKQLKVSNRLAEKHDLDMKHTFLGPHAVPKEASSNEAFLEEMIALLPEVKQYADFADIFCETGVFTIEQSQHYMQKAKEAGFKVKIHADEIDPLGGLELAIDEQAISADHLVASSDKGKEKLRNSDTVAVLLPATTFYLGKEDYADARGMLDNNGAIALATDYNPGSSVTNNLQLVMAIAALKLKLSPNEVWNAVTVNAAKAIDINAGTINTGDKANLVIWDAPNHEYIPYHFGINHAEKVIKDGKVIVDNTLSFKA.

Fe(3+) contacts are provided by H76 and H78. The Zn(2+) site is built by H76 and H78. 4-imidazolone-5-propanoate is bound by residues R85, Y148, and H181. Residue Y148 participates in N-formimidoyl-L-glutamate binding. Residue H242 coordinates Fe(3+). H242 serves as a coordination point for Zn(2+). E245 is a 4-imidazolone-5-propanoate binding site. D317 contributes to the Fe(3+) binding site. Position 317 (D317) interacts with Zn(2+). N319 and G321 together coordinate N-formimidoyl-L-glutamate. Position 322 (S322) interacts with 4-imidazolone-5-propanoate.

This sequence belongs to the metallo-dependent hydrolases superfamily. HutI family. Zn(2+) serves as cofactor. The cofactor is Fe(3+).

The protein localises to the cytoplasm. It carries out the reaction 4-imidazolone-5-propanoate + H2O = N-formimidoyl-L-glutamate. Its pathway is amino-acid degradation; L-histidine degradation into L-glutamate; N-formimidoyl-L-glutamate from L-histidine: step 3/3. In terms of biological role, catalyzes the hydrolytic cleavage of the carbon-nitrogen bond in imidazolone-5-propanoate to yield N-formimidoyl-L-glutamate. It is the third step in the universal histidine degradation pathway. This chain is Imidazolonepropionase, found in Staphylococcus aureus (strain bovine RF122 / ET3-1).